We begin with the raw amino-acid sequence, 520 residues long: Sterile alpha motif domain-containing protein 3 (520 aa).

The region spanning 4–71 (WSVEQVCSWL…KYKQNTQGLK (68 aa)) is the SAM domain. Residues 85-114 (TEAARDYRDEESSSPARHGEQMPSFYPAEN) are disordered.

This Homo sapiens (Human) protein is Sterile alpha motif domain-containing protein 3 (SAMD3).